We begin with the raw amino-acid sequence, 352 residues long: tRNA-specific 2-thiouridylase MnmA (352 aa).

Residues 6-13 and leucine 32 contribute to the ATP site; that span reads AMSGGVDS. The active-site Nucleophile is cysteine 101. A disulfide bridge links cysteine 101 with cysteine 194. Residue glycine 125 participates in ATP binding. Residues 144–146 form an interaction with tRNA region; it reads KDQ. The Cysteine persulfide intermediate role is filled by cysteine 194.

Belongs to the MnmA/TRMU family.

It is found in the cytoplasm. The catalysed reaction is S-sulfanyl-L-cysteinyl-[protein] + uridine(34) in tRNA + AH2 + ATP = 2-thiouridine(34) in tRNA + L-cysteinyl-[protein] + A + AMP + diphosphate + H(+). Its function is as follows. Catalyzes the 2-thiolation of uridine at the wobble position (U34) of tRNA, leading to the formation of s(2)U34. This Frankia casuarinae (strain DSM 45818 / CECT 9043 / HFP020203 / CcI3) protein is tRNA-specific 2-thiouridylase MnmA.